An 89-amino-acid polypeptide reads, in one-letter code: DNA-directed RNA polymerase subunit omega (89 aa).

This sequence belongs to the RNA polymerase subunit omega family. In terms of assembly, the RNAP catalytic core consists of 2 alpha, 1 beta, 1 beta' and 1 omega subunit. When a sigma factor is associated with the core the holoenzyme is formed, which can initiate transcription.

It carries out the reaction RNA(n) + a ribonucleoside 5'-triphosphate = RNA(n+1) + diphosphate. Functionally, promotes RNA polymerase assembly. Latches the N- and C-terminal regions of the beta' subunit thereby facilitating its interaction with the beta and alpha subunits. The sequence is that of DNA-directed RNA polymerase subunit omega from Idiomarina loihiensis (strain ATCC BAA-735 / DSM 15497 / L2-TR).